Consider the following 313-residue polypeptide: tRNA dimethylallyltransferase (313 aa).

10–17 (GPTAVGKS) contributes to the ATP binding site. Residue 12-17 (TAVGKS) participates in substrate binding. An interaction with substrate tRNA region spans residues 35-38 (DSTQ).

Belongs to the IPP transferase family. In terms of assembly, monomer. Mg(2+) serves as cofactor.

It carries out the reaction adenosine(37) in tRNA + dimethylallyl diphosphate = N(6)-dimethylallyladenosine(37) in tRNA + diphosphate. Functionally, catalyzes the transfer of a dimethylallyl group onto the adenine at position 37 in tRNAs that read codons beginning with uridine, leading to the formation of N6-(dimethylallyl)adenosine (i(6)A). The protein is tRNA dimethylallyltransferase of Oceanobacillus iheyensis (strain DSM 14371 / CIP 107618 / JCM 11309 / KCTC 3954 / HTE831).